The primary structure comprises 366 residues: Holliday junction branch migration complex subunit RuvB (366 aa).

Residues M1–D48 form a disordered region. The tract at residues G21–Y212 is large ATPase domain (RuvB-L). ATP-binding positions include L51, R52, G93, K96, T97, T98, E159–F161, R202, Y212, and R249. T97 is a Mg(2+) binding site. Residues T213–G283 are small ATPAse domain (RuvB-S). The segment at H286–S366 is head domain (RuvB-H). R341, R343, and R346 together coordinate DNA.

The protein belongs to the RuvB family. As to quaternary structure, homohexamer. Forms an RuvA(8)-RuvB(12)-Holliday junction (HJ) complex. HJ DNA is sandwiched between 2 RuvA tetramers; dsDNA enters through RuvA and exits via RuvB. An RuvB hexamer assembles on each DNA strand where it exits the tetramer. Each RuvB hexamer is contacted by two RuvA subunits (via domain III) on 2 adjacent RuvB subunits; this complex drives branch migration. In the full resolvosome a probable DNA-RuvA(4)-RuvB(12)-RuvC(2) complex forms which resolves the HJ.

The protein resides in the cytoplasm. It carries out the reaction ATP + H2O = ADP + phosphate + H(+). The RuvA-RuvB-RuvC complex processes Holliday junction (HJ) DNA during genetic recombination and DNA repair, while the RuvA-RuvB complex plays an important role in the rescue of blocked DNA replication forks via replication fork reversal (RFR). RuvA specifically binds to HJ cruciform DNA, conferring on it an open structure. The RuvB hexamer acts as an ATP-dependent pump, pulling dsDNA into and through the RuvAB complex. RuvB forms 2 homohexamers on either side of HJ DNA bound by 1 or 2 RuvA tetramers; 4 subunits per hexamer contact DNA at a time. Coordinated motions by a converter formed by DNA-disengaged RuvB subunits stimulates ATP hydrolysis and nucleotide exchange. Immobilization of the converter enables RuvB to convert the ATP-contained energy into a lever motion, pulling 2 nucleotides of DNA out of the RuvA tetramer per ATP hydrolyzed, thus driving DNA branch migration. The RuvB motors rotate together with the DNA substrate, which together with the progressing nucleotide cycle form the mechanistic basis for DNA recombination by continuous HJ branch migration. Branch migration allows RuvC to scan DNA until it finds its consensus sequence, where it cleaves and resolves cruciform DNA. The chain is Holliday junction branch migration complex subunit RuvB from Rhodopirellula baltica (strain DSM 10527 / NCIMB 13988 / SH1).